The following is a 328-amino-acid chain: DNA-directed RNA polymerase subunit alpha (328 aa).

Residues M1–E234 are alpha N-terminal domain (alpha-NTD). The alpha C-terminal domain (alpha-CTD) stretch occupies residues V248–V328.

The protein belongs to the RNA polymerase alpha chain family. In terms of assembly, homodimer. The RNAP catalytic core consists of 2 alpha, 1 beta, 1 beta' and 1 omega subunit. When a sigma factor is associated with the core the holoenzyme is formed, which can initiate transcription.

The enzyme catalyses RNA(n) + a ribonucleoside 5'-triphosphate = RNA(n+1) + diphosphate. DNA-dependent RNA polymerase catalyzes the transcription of DNA into RNA using the four ribonucleoside triphosphates as substrates. This chain is DNA-directed RNA polymerase subunit alpha, found in Methylobacillus flagellatus (strain ATCC 51484 / DSM 6875 / VKM B-1610 / KT).